The primary structure comprises 419 residues: Putative zinc metalloprotease SPs1691 (419 aa).

A Zn(2+)-binding site is contributed by His18. Glu19 is an active-site residue. Zn(2+) is bound at residue His22. 4 consecutive transmembrane segments (helical) span residues 169 to 191 (LITNFAGPMNNFILGIVVFILLV), 301 to 323 (LAWSGAFTILNALKGLITGFSLN), 343 to 365 (LESVLSLMAMLSINLGIFNLIPI), and 392 to 411 (AYITLAGVAIMVVLMIAVTW). The region spanning 175 to 274 (GPMNNFILGI…LKTVAVKPQK (100 aa)) is the PDZ domain.

This sequence belongs to the peptidase M50B family. The cofactor is Zn(2+).

Its subcellular location is the cell membrane. The sequence is that of Putative zinc metalloprotease SPs1691 (eep) from Streptococcus pyogenes serotype M3 (strain SSI-1).